A 333-amino-acid polypeptide reads, in one-letter code: GTPase Obg (333 aa).

Positions 1–159 (MKFIDEATIT…ATVRLELKLL (159 aa)) constitute an Obg domain. Positions 63 to 85 (KQFAAPNGAPGEGRQKTGKSGDD) are disordered. Over residues 75–84 (GRQKTGKSGD) the composition is skewed to basic and acidic residues. Residues 160 to 329 (ADVGLIGLPN…LKKHLFELLC (170 aa)) enclose the OBG-type G domain. Residues 166–173 (GLPNAGKS), 191–195 (FTTLS), 213–216 (DIPG), 283–286 (NKMD), and 310–312 (SAA) contribute to the GTP site. 2 residues coordinate Mg(2+): Ser-173 and Thr-193.

This sequence belongs to the TRAFAC class OBG-HflX-like GTPase superfamily. OBG GTPase family. Monomer. It depends on Mg(2+) as a cofactor.

It is found in the cytoplasm. In terms of biological role, an essential GTPase which binds GTP, GDP and possibly (p)ppGpp with moderate affinity, with high nucleotide exchange rates and a fairly low GTP hydrolysis rate. Plays a role in control of the cell cycle, stress response, ribosome biogenesis and in those bacteria that undergo differentiation, in morphogenesis control. This is GTPase Obg from Desulfosudis oleivorans (strain DSM 6200 / JCM 39069 / Hxd3) (Desulfococcus oleovorans).